The chain runs to 376 residues: Serine/threonine-protein kinase-transforming protein mos (376 aa).

In terms of domain architecture, Protein kinase spans Val94–Met376. Residues Leu100–Val108 and Lys121 contribute to the ATP site. Catalysis depends on Asp229, which acts as the Proton acceptor.

The protein belongs to the protein kinase superfamily. Ser/Thr protein kinase family.

It catalyses the reaction L-seryl-[protein] + ATP = O-phospho-L-seryl-[protein] + ADP + H(+). The catalysed reaction is L-threonyl-[protein] + ATP = O-phospho-L-threonyl-[protein] + ADP + H(+). This is Serine/threonine-protein kinase-transforming protein mos (V-MOS) from Moloney murine sarcoma virus (strain m1) (MoMSV).